The following is a 782-amino-acid chain: Translation initiation factor IF-2 (782 aa).

Positions 1–14 (MSKNIDDKNEDGKK) are enriched in basic and acidic residues. 2 disordered regions span residues 1 to 106 (MSKN…KKTY) and 132 to 174 (SIVS…AETE). A compositionally biased stretch (basic residues) spans 15–25 (IKIIKLRKKVV). Polar residues predominate over residues 31 to 43 (NDLSGKNNPSGST). A compositionally biased stretch (basic and acidic residues) spans 44-61 (DLHKHNNKVEYSHSRDGR). Composition is skewed to polar residues over residues 86 to 106 (GYSQ…KKTY) and 133 to 142 (IVSSASSTDS). A compositionally biased stretch (basic and acidic residues) spans 143–159 (ENSKELNRKLGEKKKQQ). One can recognise a tr-type G domain in the interval 280 to 453 (EKPPVITIMG…DMMLLKANPS (174 aa)). The interval 289-296 (GHVDHGKT) is G1. Residue 289-296 (GHVDHGKT) coordinates GTP. Residues 314–318 (GITQH) form a G2 region. The G3 stretch occupies residues 335–338 (DTPG). GTP contacts are provided by residues 335-339 (DTPGH) and 389-392 (NKID). Positions 389–392 (NKID) are G4. A G5 region spans residues 425-427 (SAL).

This sequence belongs to the TRAFAC class translation factor GTPase superfamily. Classic translation factor GTPase family. IF-2 subfamily.

The protein resides in the cytoplasm. One of the essential components for the initiation of protein synthesis. Protects formylmethionyl-tRNA from spontaneous hydrolysis and promotes its binding to the 30S ribosomal subunits. Also involved in the hydrolysis of GTP during the formation of the 70S ribosomal complex. In Borreliella afzelii (strain PKo) (Borrelia afzelii), this protein is Translation initiation factor IF-2.